A 117-amino-acid chain; its full sequence is UPF0122 protein TTE1463 (117 aa).

The protein belongs to the UPF0122 family.

Functionally, might take part in the signal recognition particle (SRP) pathway. This is inferred from the conservation of its genetic proximity to ftsY/ffh. May be a regulatory protein. In Caldanaerobacter subterraneus subsp. tengcongensis (strain DSM 15242 / JCM 11007 / NBRC 100824 / MB4) (Thermoanaerobacter tengcongensis), this protein is UPF0122 protein TTE1463.